The primary structure comprises 1405 residues: DNA-directed RNA polymerase subunit beta' (1405 aa).

Zn(2+) is bound by residues Cys71, Cys73, Cys86, and Cys89. Positions 462, 464, and 466 each coordinate Mg(2+). Zn(2+)-binding residues include Cys820, Cys893, Cys900, and Cys903.

It belongs to the RNA polymerase beta' chain family. In terms of assembly, the RNAP catalytic core consists of 2 alpha, 1 beta, 1 beta' and 1 omega subunit. When a sigma factor is associated with the core the holoenzyme is formed, which can initiate transcription. Requires Mg(2+) as cofactor. Zn(2+) serves as cofactor.

The catalysed reaction is RNA(n) + a ribonucleoside 5'-triphosphate = RNA(n+1) + diphosphate. DNA-dependent RNA polymerase catalyzes the transcription of DNA into RNA using the four ribonucleoside triphosphates as substrates. The chain is DNA-directed RNA polymerase subunit beta' from Methylorubrum extorquens (strain CM4 / NCIMB 13688) (Methylobacterium extorquens).